A 666-amino-acid chain; its full sequence is Pantothenate kinase 1 (666 aa).

Belongs to the type II pantothenate kinase family.

The catalysed reaction is (R)-pantothenate + ATP = (R)-4'-phosphopantothenate + ADP + H(+). It functions in the pathway cofactor biosynthesis; coenzyme A biosynthesis; CoA from (R)-pantothenate: step 1/5. Its activity is regulated as follows. Regulated by feedback inhibition by malonyl-CoA. In terms of biological role, catalyzes the phosphorylation of pantothenate the first step in CoA biosynthesis. May play a role in the physiological regulation of the intracellular CoA concentration. In Oryza sativa subsp. japonica (Rice), this protein is Pantothenate kinase 1.